The following is a 123-amino-acid chain: Small ribosomal subunit protein uS12 (123 aa).

The tract at residues 1–22 is disordered; it reads MATINQLVRKPRKRKAKTSDVR. 3-methylthioaspartic acid is present on Asp89. Residues 101–123 are disordered; sequence ALDTSGVNDRKRGRSKYGTKRPK. The segment covering 111–123 has biased composition (basic residues); the sequence is KRGRSKYGTKRPK.

It belongs to the universal ribosomal protein uS12 family. As to quaternary structure, part of the 30S ribosomal subunit. Contacts proteins S8 and S17. May interact with IF1 in the 30S initiation complex.

In terms of biological role, with S4 and S5 plays an important role in translational accuracy. Functionally, interacts with and stabilizes bases of the 16S rRNA that are involved in tRNA selection in the A site and with the mRNA backbone. Located at the interface of the 30S and 50S subunits, it traverses the body of the 30S subunit contacting proteins on the other side and probably holding the rRNA structure together. The combined cluster of proteins S8, S12 and S17 appears to hold together the shoulder and platform of the 30S subunit. This chain is Small ribosomal subunit protein uS12, found in Teredinibacter turnerae (strain ATCC 39867 / T7901).